The sequence spans 48 residues: Osteocalcin (48 aa).

One can recognise a Gla domain in the interval 1–46 (SFAVGSSYGAAPDPLEAQREVCELNPDCDELADHIGFQEAYRRFYG). Positions 16, 20, 23, and 29 each coordinate Ca(2+). A 4-carboxyglutamate mark is found at Glu16, Glu20, and Glu23. A disulfide bridge links Cys22 with Cys28.

This sequence belongs to the osteocalcin/matrix Gla protein family. In terms of processing, gamma-carboxyglutamate residues are formed by vitamin K dependent carboxylation by GGCX. These residues are essential for the binding of calcium.

Its subcellular location is the secreted. Its function is as follows. The carboxylated form is one of the main organic components of the bone matrix, which constitutes 1-2% of the total bone protein. The carboxylated form binds strongly to apatite and calcium. The sequence is that of Osteocalcin (BGLAP) from Dromaius novaehollandiae (Emu).